Here is a 517-residue protein sequence, read N- to C-terminus: FERM domain-containing protein 5 (517 aa).

An FERM domain is found at 17 to 298; sequence YSCTVRLLDD…ENQAFYKLEK (282 aa). The interaction with ROCK1 stretch occupies residues 308-353; sequence SNLFFKGSRFRYSGRVAKEVMESSAKIKREPPEIHRAGMVPSRSCP. The segment at 344-367 is disordered; the sequence is AGMVPSRSCPSITHGPRLSSVPRT. Ser375 carries the post-translational modification Phosphoserine. Disordered regions lie at residues 385–408 and 485–517; these read DSAH…VRSS and GHGG…VPLD. Positions 388 to 398 are enriched in polar residues; that stretch reads HSTPVRSSSHG. A compositionally biased stretch (low complexity) spans 498–517; it reads KGPQLQQQQWKGWGKSVPLD.

In terms of assembly, interacts with CTNND1, ITGB5 (via cytoplasmic domain) and ROCK1.

It is found in the cell junction. The protein resides in the adherens junction. Its function is as follows. May be involved in regulation of cell migration. May regulate cell-matrix interactions via its interaction with ITGB5 and modifying ITGB5 cytoplasmic tail interactions such as with FERMT2 and TLN1. May regulate ROCK1 kinase activity possibly involved in regulation of actin stress fiber formation. This is FERM domain-containing protein 5 (Frmd5) from Mus musculus (Mouse).